A 282-amino-acid chain; its full sequence is Elongation factor Ts (282 aa).

Residues 79–82 (TDFV) are involved in Mg(2+) ion dislocation from EF-Tu.

This sequence belongs to the EF-Ts family.

Its subcellular location is the cytoplasm. Associates with the EF-Tu.GDP complex and induces the exchange of GDP to GTP. It remains bound to the aminoacyl-tRNA.EF-Tu.GTP complex up to the GTP hydrolysis stage on the ribosome. This is Elongation factor Ts from Shewanella woodyi (strain ATCC 51908 / MS32).